Consider the following 355-residue polypeptide: 6-aminohexanoate-oligomer endohydrolase (355 aa).

T267 functions as the Nucleophile in the catalytic mechanism.

The protein belongs to the peptidase S58 family. As to quaternary structure, heterotetramer composed of 4 alpha/beta heterodimers. Expressed as an inactive precursor that is cleaved autocatalytically at Asn266/Thr267 to generate an active enzyme composed of an alpha subunit and a beta subunit.

The enzyme catalyses [N-(6-aminohexanoyl)]n + H2O = [N-(6-aminohexanoyl)]n-x + [N-(6-aminohexanoyl)]x.. It participates in xenobiotic degradation; nylon-6 oligomer degradation. In terms of biological role, involved in the degradation of nylon-6 oligomers. Degrades cyclic and linear oligomers of 6-aminohexanoate (Ahx) with a degree of polymerization greater than three by an endo-type mode. Cannot use Ahx cyclic dimer or the Ahx linear dimer. The protein is 6-aminohexanoate-oligomer endohydrolase of Kocuria sp. (strain KY2).